The primary structure comprises 407 residues: Putative D-cysteine desulfhydrase 2, mitochondrial (407 aa).

The N-terminal 34 residues, 1–34 (MRPSPALAGGGRTVANLLSATEWMLPSPATQVHT), are a transit peptide targeting the mitochondrion. Positions 39–72 (PSHSPPSPPHHFAFSNLTTAPKRNGGKGEEEGRP) are disordered. Lys90 carries the N6-(pyridoxal phosphate)lysine modification.

Belongs to the ACC deaminase/D-cysteine desulfhydrase family. Requires pyridoxal 5'-phosphate as cofactor.

It localises to the mitochondrion. It carries out the reaction D-cysteine + H2O = hydrogen sulfide + pyruvate + NH4(+) + H(+). Its function is as follows. Catalyzes the production of hydrogen sulfide (H2S) from cysteine. This is Putative D-cysteine desulfhydrase 2, mitochondrial from Oryza sativa subsp. japonica (Rice).